The primary structure comprises 428 residues: Putative zinc metalloprotease SAS1196 (428 aa).

His-21 serves as a coordination point for Zn(2+). Glu-22 is an active-site residue. His-25 contacts Zn(2+). 4 consecutive transmembrane segments (helical) span residues 172-194 (FLTL…IGLA), 309-331 (GSTL…GFSF), 352-374 (IISL…LIPI), and 401-420 (TTII…LVTW). One can recognise a PDZ domain in the interval 186–269 (ALVLFIGLAY…TKSVELTPKK (84 aa)).

Belongs to the peptidase M50B family. Zn(2+) is required as a cofactor.

The protein resides in the cell membrane. The protein is Putative zinc metalloprotease SAS1196 of Staphylococcus aureus (strain MSSA476).